Here is an 88-residue protein sequence, read N- to C-terminus: MVKIRLKRVGKKFNVIYKIVVADSRAPRDGRFIEEVGNYNPHSKSLNLKKEAIISWLNQGVKPSDTVKRLLTREKVWEEFTSLKNNKN.

This sequence belongs to the bacterial ribosomal protein bS16 family.

This is Small ribosomal subunit protein bS16 from Mycoplasmopsis pulmonis (strain UAB CTIP) (Mycoplasma pulmonis).